The sequence spans 588 residues: Arylsulfatase L (588 aa).

An N-terminal signal peptide occupies residues 1–31; the sequence is MLHLHHSWLCFRSWLAGMLSVLLGLVPSASS. N-linked (GlcNAc...) asparagine glycosylation is present at Asn-32. Ca(2+)-binding residues include Asp-46 and Asp-47. N-linked (GlcNAc...) asparagine glycosylation occurs at Asn-58. Cys-86 lines the Ca(2+) pocket. Residue Cys-86 is the Nucleophile of the active site. Residue Cys-86 is modified to 3-oxoalanine (Cys). Asn-125 carries an N-linked (GlcNAc...) asparagine glycan. Lys-145 provides a ligand contact to substrate. The active site involves His-147. A glycan (N-linked (GlcNAc...) asparagine) is linked at Asn-258. Residue His-301 coordinates substrate. Asn-344 is a glycosylation site (N-linked (GlcNAc...) asparagine). Residues Asp-353 and His-354 each contribute to the Ca(2+) site. Lys-378 contacts substrate.

Belongs to the sulfatase family. Ca(2+) serves as cofactor. In terms of processing, the conversion to 3-oxoalanine (also known as C-formylglycine, FGly), of a serine or cysteine residue in prokaryotes and of a cysteine residue in eukaryotes, is critical for catalytic activity.

The protein resides in the golgi apparatus. The protein localises to the golgi stack. It catalyses the reaction an aryl sulfate + H2O = a phenol + sulfate + H(+). In terms of biological role, exhibits arylsulfatase activity towards the artificial substrate 4-methylumbelliferyl sulfate. May be essential for the correct composition of cartilage and bone matrix during development. Has no activity toward steroid sulfates. The protein is Arylsulfatase L (ARSL) of Macaca fascicularis (Crab-eating macaque).